Reading from the N-terminus, the 613-residue chain is Portal protein (613 aa).

Positions 577-613 (ATGGDHGIRQAPSARGDAEPDHAKSKPARDPPPGAGS) are disordered. Residues 592 to 605 (GDAEPDHAKSKPAR) are compositionally biased toward basic and acidic residues.

The protein belongs to the herpesviridae portal protein family. Homododecamerizes. Interacts with terminase subunits TRM1 and TRM3.

It is found in the virion. It localises to the host nucleus. Forms a portal in the viral capsid through which viral DNA is translocated during DNA packaging. Assembles as a dodecamer at a single fivefold axe of the T=16 icosahedric capsid. Binds to the molecular motor that translocates the viral DNA, termed terminase. The protein is Portal protein of Homo sapiens (Human).